A 380-amino-acid polypeptide reads, in one-letter code: Cell division protein ZipA (380 aa).

At 1–7 (MEDNFRN) the chain is on the periplasmic side. The chain crosses the membrane as a helical span at residues 8–28 (VLIILSAIVITAIFIHGLWTL). The Cytoplasmic segment spans residues 29–380 (RKQKNPYKLK…DRKSRIALVE (352 aa)).

This sequence belongs to the ZipA family. In terms of assembly, interacts with FtsZ via their C-terminal domains.

Its subcellular location is the cell inner membrane. Essential cell division protein that stabilizes the FtsZ protofilaments by cross-linking them and that serves as a cytoplasmic membrane anchor for the Z ring. Also required for the recruitment to the septal ring of downstream cell division proteins. The polypeptide is Cell division protein ZipA (Colwellia psychrerythraea (strain 34H / ATCC BAA-681) (Vibrio psychroerythus)).